Reading from the N-terminus, the 1095-residue chain is Solute carrier family 12 member 1 (1095 aa).

The Cytoplasmic portion of the chain corresponds to 1–173; that stretch reads MSVSIPSNSV…EEDMTGVVKF (173 aa). Positions 16–19 match the RFXV motif motif; the sequence is RFQV. The interval 29–49 is disordered; sequence AAAVGDSADPPHYEETSFGDE. 2 positions are modified to phosphoserine: S57 and S87. Phosphothreonine is present on residues T91, T96, T101, and T114. S116 bears the Phosphoserine mark. The residue at position 126 (S126) is a Phosphoserine; by AMPK. The residue at position 144 (S144) is a Phosphoserine. Residues 174 to 194 traverse the membrane as a helical segment; that stretch reads GWVKGVLVRCMLNIWGVMLFI. Residues 195 to 197 are Extracellular-facing; the sequence is RLS. Residues 198–218 form a helical membrane-spanning segment; sequence WIVGEAGIGLGVLIILLSTMV. The Cytoplasmic segment spans residues 219-255; it reads TSITGLSTSAIATNGFVRGGGAYYLISRSLGPEFGGS. Residues 256–276 traverse the membrane as a helical segment; it reads IGLIFAFANAVAVAMYVVGFA. Residues 277-298 are Extracellular-facing; sequence ETVVDLLKESDSMMVDPTNDIR. A helical transmembrane segment spans residues 299–319; the sequence is IIGSITVVILLGISVAGMEWE. The Cytoplasmic segment spans residues 320–323; it reads AKAQ. Residues 324 to 344 traverse the membrane as a helical segment; the sequence is VILLVILLIAIANFFIGTVIP. At 345-375 the chain is on the extracellular side; the sequence is SNNEKKSRGFFNYQASIFAENFGPSFTKGEG. A helical transmembrane segment spans residues 376-396; it reads FFSVFAIFFPAATGILAGANI. Over 397-413 the chain is Cytoplasmic; sequence SGDLEDPQDAIPRGTML. Residues 414 to 434 form a helical membrane-spanning segment; it reads AIFITTVAYIGVAICVAACVV. At 435 to 546 the chain is on the extracellular side; it reads RDATGSMNDT…NNEPLRGYFL (112 aa). N-linked (GlcNAc...) asparagine glycans are attached at residues N442 and N452. The next 2 helical transmembrane spans lie at 547-567 and 568-588; these read TFVI…APII and SNFF…ASYA. Residues 589-605 lie on the Extracellular side of the membrane; that stretch reads KSPGWRPAYGIYNMWVS. A helical transmembrane segment spans residues 606-626; the sequence is LFGAILCCAVMFVINWWAAVI. Residues 627 to 1095 lie on the Cytoplasmic side of the membrane; sequence TYVIELFLYI…NHKNVLTFYS (469 aa).

The protein belongs to the SLC12A transporter family. When phosphorylated, interacts with PPP3CB. Phosphorylated at Ser-87, Thr-96 and Thr-101 by OXSR1/OSR1 and STK39/SPAK downstream of WNK kinases (WNK1, WNK2, WNK3 or WNK4), promoting its activity. Short-term cyclosporine administration increases SLC12A1 phosphorylation in kidney thick ascending limb, possibly through the inhibition of PPP3CB/calcineurin A beta phosphatase. In terms of tissue distribution, predominantly expressed in kidney (at protein level). As to expression, kidney-specific; most highly expressed in the outer stripe of outer medulla (at protein level). Kidney-specific; most highly expressed in the cortical thick ascending limb (at protein level). In terms of tissue distribution, kidney-specific; most highly expressed in the inner stripe of outer medulla (at protein level).

It localises to the apical cell membrane. The catalysed reaction is K(+)(out) + 2 chloride(out) + Na(+)(out) = K(+)(in) + 2 chloride(in) + Na(+)(in). Activated following phosphorylation by OXSR1/OSR1 and STK39/SPAK downstream of WNK kinases (WNK1, WNK2, WNK3 or WNK4). Its activity is regulated as follows. Inhibited by mercury dichloride and diuretic drug bumetaide. Inactive in isotonic conditions. Functionally, renal sodium, potassium and chloride ion cotransporter that mediates the transepithelial NaCl reabsorption in the thick ascending limb and plays an essential role in the urinary concentration and volume regulation. Electrically silent transporter system. In terms of biological role, high affinity, high capacity cotransporter for sodium, potassium and chloride ions, with a coupling ratio 1Na(+):1K(+):2Cl(-). High affinity, low capacity cotransporter for sodium, potassium and chloride ions, with a coupling ratio 1Na(+):1K(+):2Cl(-). Its function is as follows. Low affinity, low capacity cotransporter for sodium, potassium and chloride ions, with a coupling ratio 1Na(+):1K(+):2Cl(-). The protein is Solute carrier family 12 member 1 (Slc12a1) of Mus musculus (Mouse).